A 367-amino-acid polypeptide reads, in one-letter code: MKKQRIAVKIGSSSLADSHGGISKEQLSDHVAALARLKEEGHEVLLITSGAVAAGFSALGYPSRPVTIKGKQAAAAVGQSLLMQAYTEEFRKYGIVTAQLLLTRSDFSRKEQYSNAYATLGELLNRSALPIINENDSISLEELTFGDNDMLSALVSGLVSADMLMIFTDVNGLYDQNPQKNADAKKYHFLPEVTEEIASLAGDAGSKLGTGGMKSKIDAAKTALSLGVSVFIGTGCGQEKFLDVMKGKGDGTYIGNAPQKVIKMNKQWIALHSLVSGQIEVDAGAATAIIQHGKSLLPAGVTSVSGFFQVDEVVEVITQQGRVIGKGQCTYSAEELRNLKGMQSQDIQARGERHNYEVIHRDHWVSF.

Position 9 (Lys-9) interacts with ATP. Residues Ser-49, Asp-136, and Asn-148 each contribute to the substrate site. ATP contacts are provided by residues 168–169 (TD) and 210–216 (TGGMKSK). The 75-residue stretch at 276–350 (SGQIEVDAGA…GMQSQDIQAR (75 aa)) folds into the PUA domain.

The protein belongs to the glutamate 5-kinase family.

The protein resides in the cytoplasm. It carries out the reaction L-glutamate + ATP = L-glutamyl 5-phosphate + ADP. It functions in the pathway amino-acid biosynthesis; L-proline biosynthesis; L-glutamate 5-semialdehyde from L-glutamate: step 1/2. Its function is as follows. Catalyzes the transfer of a phosphate group to glutamate to form L-glutamate 5-phosphate. In Bacillus mycoides (strain KBAB4) (Bacillus weihenstephanensis), this protein is Glutamate 5-kinase.